The chain runs to 179 residues: ATP synthase subunit b (179 aa).

The chain crosses the membrane as a helical span at residues 23 to 43 (IVVGLVAFGLLAFVLMKFVFP).

Belongs to the ATPase B chain family. In terms of assembly, F-type ATPases have 2 components, F(1) - the catalytic core - and F(0) - the membrane proton channel. F(1) has five subunits: alpha(3), beta(3), gamma(1), delta(1), epsilon(1). F(0) has three main subunits: a(1), b(2) and c(10-14). The alpha and beta chains form an alternating ring which encloses part of the gamma chain. F(1) is attached to F(0) by a central stalk formed by the gamma and epsilon chains, while a peripheral stalk is formed by the delta and b chains.

It is found in the cell membrane. In terms of biological role, f(1)F(0) ATP synthase produces ATP from ADP in the presence of a proton or sodium gradient. F-type ATPases consist of two structural domains, F(1) containing the extramembraneous catalytic core and F(0) containing the membrane proton channel, linked together by a central stalk and a peripheral stalk. During catalysis, ATP synthesis in the catalytic domain of F(1) is coupled via a rotary mechanism of the central stalk subunits to proton translocation. Component of the F(0) channel, it forms part of the peripheral stalk, linking F(1) to F(0). In Salinispora arenicola (strain CNS-205), this protein is ATP synthase subunit b.